The sequence spans 430 residues: UDP-N-acetylmuramoylalanine--D-glutamate ligase (430 aa).

109–115 (GTDGKST) contributes to the ATP binding site.

The protein belongs to the MurCDEF family.

It is found in the cytoplasm. It carries out the reaction UDP-N-acetyl-alpha-D-muramoyl-L-alanine + D-glutamate + ATP = UDP-N-acetyl-alpha-D-muramoyl-L-alanyl-D-glutamate + ADP + phosphate + H(+). It functions in the pathway cell wall biogenesis; peptidoglycan biosynthesis. Cell wall formation. Catalyzes the addition of glutamate to the nucleotide precursor UDP-N-acetylmuramoyl-L-alanine (UMA). The polypeptide is UDP-N-acetylmuramoylalanine--D-glutamate ligase (Thermotoga maritima (strain ATCC 43589 / DSM 3109 / JCM 10099 / NBRC 100826 / MSB8)).